Consider the following 68-residue polypeptide: Large ribosomal subunit protein bL35 (68 aa).

Belongs to the bacterial ribosomal protein bL35 family.

This Wolbachia pipientis subsp. Culex pipiens (strain wPip) protein is Large ribosomal subunit protein bL35.